Consider the following 127-residue polypeptide: Aspartate 1-decarboxylase (127 aa).

The Schiff-base intermediate with substrate; via pyruvic acid role is filled by S25. The residue at position 25 (S25) is a Pyruvic acid (Ser). T57 lines the substrate pocket. Y58 serves as the catalytic Proton donor. 73-75 (GAA) contacts substrate.

It belongs to the PanD family. In terms of assembly, heterooctamer of four alpha and four beta subunits. It depends on pyruvate as a cofactor. In terms of processing, is synthesized initially as an inactive proenzyme, which is activated by self-cleavage at a specific serine bond to produce a beta-subunit with a hydroxyl group at its C-terminus and an alpha-subunit with a pyruvoyl group at its N-terminus.

The protein localises to the cytoplasm. The enzyme catalyses L-aspartate + H(+) = beta-alanine + CO2. It functions in the pathway cofactor biosynthesis; (R)-pantothenate biosynthesis; beta-alanine from L-aspartate: step 1/1. Functionally, catalyzes the pyruvoyl-dependent decarboxylation of aspartate to produce beta-alanine. In Anoxybacillus flavithermus (strain DSM 21510 / WK1), this protein is Aspartate 1-decarboxylase.